A 1533-amino-acid polypeptide reads, in one-letter code: Actin cytoskeleton-regulatory complex protein pan-1 (1533 aa).

The interval methionine 1–threonine 204 is disordered. Composition is skewed to low complexity over residues glutamine 19–glycine 46, glycine 53–glycine 136, isoleucine 143–proline 170, and glutamine 177–isoleucine 193. Positions aspartate 244 to methionine 333 constitute an EH 1 domain. The EF-hand 1 domain maps to leucine 277–lysine 312. Over residues alanine 345 to alanine 359 the composition is skewed to low complexity. Disordered regions lie at residues alanine 345–serine 378 and glutamine 393–glycine 423. Polar residues-rich tracts occupy residues threonine 360 to serine 378 and glutamine 393 to glycine 410. The 90-residue stretch at glutamate 513–asparagine 602 folds into the EH 2 domain. The 36-residue stretch at leucine 546–lysine 581 folds into the EF-hand 2 domain. Positions asparagine 649–glycine 664 are enriched in basic and acidic residues. Disordered stretches follow at residues asparagine 649 to leucine 691, isoleucine 894 to alanine 917, serine 935 to proline 1306, and aspartate 1334 to aspartate 1533. Residues aspartate 690–phenylalanine 890 adopt a coiled-coil conformation. 2 stretches are compositionally biased toward basic and acidic residues: residues isoleucine 894–aspartate 916 and serine 935–glycine 947. Low complexity predominate over residues threonine 968 to threonine 982. Residues glutamate 1026–aspartate 1209 are a coiled coil. Basic and acidic residues-rich tracts occupy residues arginine 1031 to glutamate 1063, glycine 1090 to lysine 1164, and glutamate 1173 to glutamate 1203. The segment covering alanine 1204 to proline 1218 has biased composition (acidic residues). The span at isoleucine 1221 to threonine 1237 shows a compositional bias: polar residues. Positions serine 1279–valine 1293 are enriched in low complexity. The segment covering aspartate 1348–aspartate 1367 has biased composition (acidic residues). The segment covering serine 1412–serine 1495 has biased composition (pro residues). Positions arginine 1500 to threonine 1517 constitute a WH2 domain.

The protein belongs to the PAN1 family. Component of the PAN1 actin cytoskeleton-regulatory complex.

The protein resides in the cell membrane. It is found in the endosome membrane. The protein localises to the cytoplasm. It localises to the cytoskeleton. Its subcellular location is the actin patch. Its function is as follows. Component of the PAN1 actin cytoskeleton-regulatory complex required for the internalization of endosomes during actin-coupled endocytosis. The complex links the site of endocytosis to the cell membrane-associated actin cytoskeleton. Mediates uptake of external molecules and vacuolar degradation of plasma membrane proteins. Plays a role in the proper organization of the cell membrane-associated actin cytoskeleton and promotes its destabilization. This Neurospora crassa (strain ATCC 24698 / 74-OR23-1A / CBS 708.71 / DSM 1257 / FGSC 987) protein is Actin cytoskeleton-regulatory complex protein pan-1 (pan-1).